The primary structure comprises 78 residues: Surfactant-associated protein 2 (78 aa).

Residues 1 to 19 form the signal peptide; the sequence is MGAGLPLVLLLTLVGSSQG. Asn37 carries N-linked (GlcNAc...) asparagine glycosylation.

Post-translationally, N-glycosylated.

It localises to the secreted. The protein resides in the cytoplasmic vesicle. Its subcellular location is the secretory vesicle. The protein localises to the golgi apparatus. Its function is as follows. Putative surfactant protein. The protein is Surfactant-associated protein 2 (SFTA2) of Bos taurus (Bovine).